Reading from the N-terminus, the 20-residue chain is Venom protease (20 aa).

It belongs to the peptidase S1 family. Post-translationally, contains 3 disulfide bonds. In terms of processing, N-glycosylated. As to expression, expressed by the venom duct.

Its subcellular location is the secreted. This is Venom protease from Bombus terrestris (Buff-tailed bumblebee).